A 159-amino-acid polypeptide reads, in one-letter code: MYQVLKKKKPEVYALGQHISMSADKARRVIDQIRGRSYEETLMILELMPYRAGYPIFKLVYSAAANASYTMASNEANLVISKAEVNEGTTVKKFKPRARGRSYPIKRTTCHITIVLKDISLDDSESIELNLLKKPRWKKNSTAMAYYDLHNRGGLWDKK.

The protein belongs to the universal ribosomal protein uL22 family. Part of the 50S ribosomal subunit.

The protein resides in the plastid. The protein localises to the chloroplast. Functionally, this protein binds specifically to 23S rRNA. The globular domain of the protein is located near the polypeptide exit tunnel on the outside of the subunit, while an extended beta-hairpin is found that lines the wall of the exit tunnel in the center of the 70S ribosome. The protein is Large ribosomal subunit protein uL22c (rpl22) of Ipomoea purpurea (Common morning glory).